Consider the following 157-residue polypeptide: 6,7-dimethyl-8-ribityllumazine synthase 1 (157 aa).

Residues Phe-22, 53-55 (ALE), and 82-84 (TVI) contribute to the 5-amino-6-(D-ribitylamino)uracil site. 87-88 (ET) is a binding site for (2S)-2-hydroxy-3-oxobutyl phosphate. His-90 serves as the catalytic Proton donor. Residue Asn-115 coordinates 5-amino-6-(D-ribitylamino)uracil. Residue His-129 coordinates (2S)-2-hydroxy-3-oxobutyl phosphate.

It belongs to the DMRL synthase family. As to quaternary structure, homopentamer.

The enzyme catalyses (2S)-2-hydroxy-3-oxobutyl phosphate + 5-amino-6-(D-ribitylamino)uracil = 6,7-dimethyl-8-(1-D-ribityl)lumazine + phosphate + 2 H2O + H(+). It functions in the pathway cofactor biosynthesis; riboflavin biosynthesis; riboflavin from 2-hydroxy-3-oxobutyl phosphate and 5-amino-6-(D-ribitylamino)uracil: step 1/2. Functionally, catalyzes the formation of 6,7-dimethyl-8-ribityllumazine by condensation of 5-amino-6-(D-ribitylamino)uracil with 3,4-dihydroxy-2-butanone 4-phosphate. This is the penultimate step in the biosynthesis of riboflavin. The protein is 6,7-dimethyl-8-ribityllumazine synthase 1 (ribH1) of Brucella abortus (strain 2308).